The chain runs to 161 residues: Ribonuclease H (161 aa).

The RNase H type-1 domain occupies 12–155 (QPQHVVIYTD…ADALANKGVE (144 aa)). Positions 21, 59, 81, and 147 each coordinate Mg(2+).

This sequence belongs to the RNase H family. Monomer. Mg(2+) serves as cofactor.

It localises to the cytoplasm. The catalysed reaction is Endonucleolytic cleavage to 5'-phosphomonoester.. Endonuclease that specifically degrades the RNA of RNA-DNA hybrids. The polypeptide is Ribonuclease H (Polaromonas naphthalenivorans (strain CJ2)).